Here is a 139-residue protein sequence, read N- to C-terminus: GSK3-beta interaction protein (139 aa).

The disordered stretch occupies residues 1–22 (METDCNPMELSSMSGFEEGSEL). Residues 41-45 (VNDVL) are required for PRKAR2A interaction; contributes to a protective effect against H(2)O(2)-induced apoptosis. Residues 115–139 (SPAYREAFGNALLQRLEALKRDGQS) form an interaction with GSK3B and acts as a GSK3B inhibitor region.

This sequence belongs to the GSKIP family. Forms a complex composed of PRKAR2A or PRKAR2B, GSK3B and GSKIP through GSKIP interaction; facilitates PKA-induced phosphorylation of GSK3B leading to GSK3B inactivation; recruits DNM1L through GSK3B for PKA-mediated phosphorylation of DNM1L; promotes beta-catenin degradation through GSK3B-induced phosphorylation of beta-catenin; stabilizes beta-catenin and enhances Wnt-induced signaling through PKA-induced phosphorylation of beta-catenin. Interacts with GSK3B; induces GSK3B-mediated phosphorylation of GSKIP and inhibits GSK3B kinase activity. Post-translationally, phosphorylated by GSK3B.

The protein resides in the cytoplasm. Its subcellular location is the nucleus. Its function is as follows. A-kinase anchoring protein for GSK3B and PKA that regulates or facilitates their kinase activity towards their targets. The ternary complex enhances Wnt-induced signaling by facilitating the GSK3B- and PKA-induced phosphorylation of beta-catenin leading to beta-catenin degradation and stabilization respectively. Upon cAMP activation, the ternary complex contributes to neuroprotection against oxidative stress-induced apoptosis by facilitating the PKA-induced phosphorylation of DML1 and PKA-induced inactivation of GSK3B. During neurite outgrowth promotes neuron proliferation; while increases beta-catenin-induced transcriptional activity through GSK3B kinase activity inhibition, reduces N-cadherin level to promote cell cycle progression. May play a role in cleft palate formation and is required for postnatal life through modulation of the activity of GSK3B during development. The polypeptide is GSK3-beta interaction protein (Macaca fascicularis (Crab-eating macaque)).